Consider the following 334-residue polypeptide: MALDPLGAVVLQSIMALSGRLALAALRLWGPGGGRRPISLCVGASGGFGGGGSSEKKFSLQDVAELLRTRACSRVVVMVGAGISTPSGIPDFRSPGSGLYSNLQQYDIPYPEAIFELGFFFHNPKPFFMLAKELYPGHYRPNVTHYFLRLLHDKELLLRLYTQNIDGLERASGIPASKLVEAHGTFVTATCTVCRRSFPGEDIWADVMADRVPRCPVCTGVVKPDIVFFGEQLPARFLLHMADFALADLLLILGTSLEVEPFASLSEAVQKSVPRLLINRDLVGPFVLSPRRKDVVQLGDVVHGVERLVDLLGWTQELLDLMQRERGKLDGQDR.

Residues 53 to 315 (SSEKKFSLQD…ERLVDLLGWT (263 aa)) enclose the Deacetylase sirtuin-type domain. Lys57 bears the N6-succinyllysine mark. NAD(+) contacts are provided by residues 80–100 (GAGI…SGLY) and 163–166 (QNID). The active-site Proton acceptor is His183. Residues Cys191, Cys194, Cys215, and Cys218 each contribute to the Zn(2+) site. Residues 254–256 (GTS) and 279–281 (NRD) each bind NAD(+).

The protein belongs to the sirtuin family. Class I subfamily. In terms of assembly, upon metabolic stress, forms a complex composed of FOXO3, SIRT3 and mitochondrial RNA polymerase POLRMT; the complex is recruited to mtDNA in a SIRT3-dependent manner. Also forms a complex composed of FOXO3, SIRT3, TFAM and POLRMT. Interacts with NDUFA9, ACSS1, IDH2 and GDH. Interacts with PCCA. Zn(2+) is required as a cofactor. Expressed in cardiomyocytes (at protein level). Expressed in the brain, liver, kidney and testes. Expressed in skeletal muscles (at protein level).

Its subcellular location is the mitochondrion matrix. It localises to the cytoplasm. It carries out the reaction N(6)-acetyl-L-lysyl-[protein] + NAD(+) + H2O = 2''-O-acetyl-ADP-D-ribose + nicotinamide + L-lysyl-[protein]. It catalyses the reaction N(6)-[(S)-lactoyl]-L-lysyl-[protein] + NAD(+) + H2O = 2''-O-(S)-lactoyl-ADP-D-ribose + nicotinamide + L-lysyl-[protein]. In terms of biological role, NAD-dependent protein deacetylase. Activates or deactivates mitochondrial target proteins by deacetylating key lysine residues. Known targets include ACSS1, IDH, GDH, PDHA1, SOD2, LCAD, SDHA, MRPL12 and the ATP synthase subunit ATP5PO. Contributes to the regulation of the cellular energy metabolism. Important for regulating tissue-specific ATP levels. In response to metabolic stress, deacetylates transcription factor FOXO3 and recruits FOXO3 and mitochondrial RNA polymerase POLRMT to mtDNA to promote mtDNA transcription. Acts as a regulator of ceramide metabolism by mediating deacetylation of ceramide synthases CERS1, CERS2 and CERS6, thereby increasing their activity and promoting mitochondrial ceramide accumulation. Regulates hepatic lipogenesis. Uses NAD(+) substrate imported by SLC25A47, triggering downstream activation of PRKAA1/AMPK-alpha signaling cascade that ultimately downregulates sterol regulatory element-binding protein (SREBP) transcriptional activities and ATP-consuming lipogenesis to restore cellular energy balance. In addition to protein deacetylase activity, also acts as a protein-lysine deacylase by mediating delactylation of proteins, such as CCNE2 and 'Lys-16' of histone H4 (H4K16la). This is NAD-dependent protein deacetylase sirtuin-3 from Mus musculus (Mouse).